Here is a 271-residue protein sequence, read N- to C-terminus: Interleukin-1 alpha (271 aa).

The propeptide occupies 1–112; sequence MAKVPDMFED…DSEEEIIKPR (112 aa). The residue at position 82 (Lys-82) is an N6-acetyllysine. N6-myristoyl lysine attachment occurs at residues Lys-82 and Lys-83. A nuclear localization signal (NLS) region spans residues 82-86; it reads KKRRL. Ser-87 carries the phosphoserine modification. N-linked (GlcNAc...) asparagine glycans are attached at residues Asn-102 and Asn-141.

The protein belongs to the IL-1 family. In terms of assembly, monomer. Interacts with TMED10; the interaction mediates the translocation from the cytoplasm into the ERGIC (endoplasmic reticulum-Golgi intermediate compartment) and thereby secretion. Interacts with IL1R1. Interacts with S100A13; this interaction is the first step in the export of IL1A, followed by direct translocation of this complex across the plasma membrane. In terms of processing, acetylated within its nuclear localization sequence, which impacts subcellular localization. Post-translationally, proteolytic processed by CAPN1 in a calcium-dependent manner. Cleavage from 31 kDa precursor to 18 kDa biologically active molecules. Phosphorylated. Phosphorylation greatly enhances susceptibility to digestion and promotes the conversion of pre-IL1A alpha to the biologically active IL1A.

The protein localises to the nucleus. Its subcellular location is the cytoplasm. It localises to the secreted. Functionally, cytokine constitutively present intracellularly in nearly all resting non-hematopoietic cells that plays an important role in inflammation and bridges the innate and adaptive immune systems. After binding to its receptor IL1R1 together with its accessory protein IL1RAP, forms the high affinity interleukin-1 receptor complex. Signaling involves the recruitment of adapter molecules such as MYD88, IRAK1 or IRAK4. In turn, mediates the activation of NF-kappa-B and the three MAPK pathways p38, p42/p44 and JNK pathways. Within the cell, acts as an alarmin and cell death results in its liberation in the extracellular space after disruption of the cell membrane to induce inflammation and alert the host to injury or damage. In addition to its role as a danger signal, which occurs when the cytokine is passively released by cell necrosis, directly senses DNA damage and acts as a signal for genotoxic stress without loss of cell integrity. This chain is Interleukin-1 alpha (IL1A), found in Homo sapiens (Human).